We begin with the raw amino-acid sequence, 104 residues long: Large ribosomal subunit protein bL21 (104 aa).

The protein belongs to the bacterial ribosomal protein bL21 family. Part of the 50S ribosomal subunit. Contacts protein L20.

This protein binds to 23S rRNA in the presence of protein L20. This is Large ribosomal subunit protein bL21 from Alkalilimnicola ehrlichii (strain ATCC BAA-1101 / DSM 17681 / MLHE-1).